Reading from the N-terminus, the 70-residue chain is Large ribosomal subunit protein bL31c (70 aa).

The protein belongs to the bacterial ribosomal protein bL31 family. Type A subfamily. Part of the 50S ribosomal subunit.

It localises to the plastid. The protein resides in the chloroplast. Functionally, binds the 23S rRNA. This Porphyra purpurea (Red seaweed) protein is Large ribosomal subunit protein bL31c.